A 419-amino-acid polypeptide reads, in one-letter code: Serine hydroxymethyltransferase (419 aa).

(6S)-5,6,7,8-tetrahydrofolate is bound by residues Leu121 and 125 to 127 (GHL). Position 230 is an N6-(pyridoxal phosphate)lysine (Lys230). 355–357 (SPF) provides a ligand contact to (6S)-5,6,7,8-tetrahydrofolate.

It belongs to the SHMT family. Homodimer. The cofactor is pyridoxal 5'-phosphate.

It is found in the cytoplasm. It carries out the reaction (6R)-5,10-methylene-5,6,7,8-tetrahydrofolate + glycine + H2O = (6S)-5,6,7,8-tetrahydrofolate + L-serine. It participates in one-carbon metabolism; tetrahydrofolate interconversion. The protein operates within amino-acid biosynthesis; glycine biosynthesis; glycine from L-serine: step 1/1. Its function is as follows. Catalyzes the reversible interconversion of serine and glycine with tetrahydrofolate (THF) serving as the one-carbon carrier. This reaction serves as the major source of one-carbon groups required for the biosynthesis of purines, thymidylate, methionine, and other important biomolecules. Also exhibits THF-independent aldolase activity toward beta-hydroxyamino acids, producing glycine and aldehydes, via a retro-aldol mechanism. This Streptococcus equi subsp. zooepidemicus (strain MGCS10565) protein is Serine hydroxymethyltransferase.